We begin with the raw amino-acid sequence, 379 residues long: Anhydro-N-acetylmuramic acid kinase (379 aa).

Residue 9-16 participates in ATP binding; the sequence is GTSADGVD.

This sequence belongs to the anhydro-N-acetylmuramic acid kinase family.

It carries out the reaction 1,6-anhydro-N-acetyl-beta-muramate + ATP + H2O = N-acetyl-D-muramate 6-phosphate + ADP + H(+). Its pathway is amino-sugar metabolism; 1,6-anhydro-N-acetylmuramate degradation. It functions in the pathway cell wall biogenesis; peptidoglycan recycling. In terms of biological role, catalyzes the specific phosphorylation of 1,6-anhydro-N-acetylmuramic acid (anhMurNAc) with the simultaneous cleavage of the 1,6-anhydro ring, generating MurNAc-6-P. Is required for the utilization of anhMurNAc either imported from the medium or derived from its own cell wall murein, and thus plays a role in cell wall recycling. The chain is Anhydro-N-acetylmuramic acid kinase from Prochlorococcus marinus (strain MIT 9211).